Here is a 442-residue protein sequence, read N- to C-terminus: Glutamate--methylamine ligase (442 aa).

The GS beta-grasp domain maps to Asn13–Lys97. In terms of domain architecture, GS catalytic spans Thr103–Phe442.

It belongs to the glutamine synthetase family. Type 3 subfamily. It depends on Mg(2+) as a cofactor.

The enzyme catalyses methylamine + L-glutamate + ATP = N(5)-methyl-L-glutamine + ADP + phosphate + H(+). Catalyzes the formation of N(5)-methyl-L-glutamine from glutamate and methylamine. The sequence is that of Glutamate--methylamine ligase from Methyloversatilis universalis (strain ATCC BAA-1314 / DSM 25237 / JCM 13912 / CCUG 52030 / FAM5).